The chain runs to 160 residues: Phosphopantetheine adenylyltransferase (160 aa).

Thr9 is a binding site for substrate. Residues 9–10 (TF) and His17 each bind ATP. Substrate contacts are provided by Lys41, Leu73, and Arg87. Residues 88-90 (GLR), Glu98, and 123-129 (YMFISAS) contribute to the ATP site.

The protein belongs to the bacterial CoaD family. In terms of assembly, homohexamer. Requires Mg(2+) as cofactor.

It is found in the cytoplasm. It catalyses the reaction (R)-4'-phosphopantetheine + ATP + H(+) = 3'-dephospho-CoA + diphosphate. It functions in the pathway cofactor biosynthesis; coenzyme A biosynthesis; CoA from (R)-pantothenate: step 4/5. Its function is as follows. Reversibly transfers an adenylyl group from ATP to 4'-phosphopantetheine, yielding dephospho-CoA (dPCoA) and pyrophosphate. The sequence is that of Phosphopantetheine adenylyltransferase from Thiobacillus denitrificans (strain ATCC 25259 / T1).